Reading from the N-terminus, the 464-residue chain is E3 ubiquitin-protein ligase parkin (464 aa).

The 76-residue stretch at 1–76 (MIVFVRFNSS…VHIVQRPRRR (76 aa)) folds into the Ubiquitin-like domain. A Phosphoserine; by PINK1 modification is found at Ser65. A disordered region spans residues 70–96 (VQRPRRRSHETNASGGDEPQSTSEGSI). Residues 77-236 (SHETNASGGD…LITSNRRSIP (160 aa)) form a necessary for PINK1-dependent localization to mitochondria region. The residue at position 80 (Thr80) is a Phosphothreonine. The segment covering 80–96 (TNASGGDEPQSTSEGSI) has biased composition (polar residues). Residues 140-224 (PTYNSFFIYC…PTSDKDTSVA (85 aa)) form an RING-type 0; atypical zinc finger. Thr174 is subject to Phosphothreonine; by PINK1. Positions 203–237 (TRAEFFFKCGAHPTSDKDTSVALNLITSNRRSIPC) are SYT11 binding 1. A Phosphothreonine modification is found at Thr216. Residues 233–464 (RSIPCIACTD…ACMGDHWFDV (232 aa)) form a TRIAD supradomain region. 10 residues coordinate Zn(2+): Cys237, Cys240, Cys252, His256, Cys259, Cys262, Cys288, Cys292, Cys331, and Cys336. The RING-type 1 zinc finger occupies 237 to 292 (CIACTDVRSPVLVFQCNHRHVICLDCFHLYCVTRLNDRQFVHDAQLGYSLPCVAGC). The segment at 256–292 (HVICLDCFHLYCVTRLNDRQFVHDAQLGYSLPCVAGC) is SYT11 binding 2. Residues 312 to 376 (TRYQQYGAEE…CKEAYHEGDC (65 aa)) form an IBR-type zinc finger. Residue Lys348 forms a Glycyl lysine isopeptide (Lys-Gly) (interchain with G-Cter in ISG15) linkage. Positions 351, 359, 364, and 367 each coordinate Zn(2+). Residue Lys368 forms a Glycyl lysine isopeptide (Lys-Gly) (interchain with G-Cter in ISG15) linkage. 2 residues coordinate Zn(2+): His372 and Cys376. Positions 377-409 (DSLLEPSGATSQAYRVDKRAAEQARWEEASKET) are REP. Cys417 and Cys420 together coordinate Zn(2+). Residues 417–448 (CPRCNVPIEKNGGCMHMKCPQPQCKLEWCWNC) form an RING-type 2; atypical zinc finger. Cys430 is a catalytic residue. Cys435, Cys440, Cys445, Cys448, Cys456, and His460 together coordinate Zn(2+).

The protein belongs to the RBR family. Parkin subfamily. In terms of assembly, forms an E3 ubiquitin ligase complex with UBE2L3 or UBE2L6. Mediates 'Lys-63'-linked polyubiquitination by associating with UBE2V1. Part of a SCF-like complex, consisting of PRKN, CUL1 and FBXW7. Interacts with SNCAIP. Binds to the C2A and C2B domains of SYT11. Interacts and regulates the turnover of SEPTIN5. Part of a complex, including STUB1, HSP70 and GPR37. The amount of STUB1 in the complex increases during ER stress. STUB1 promotes the dissociation of HSP70 from PRKN and GPR37, thus facilitating PRKN-mediated GPR37 ubiquitination. HSP70 transiently associates with unfolded GPR37 and inhibits the E3 activity of PRKN, whereas, STUB1 enhances the E3 activity of PRKN through promotion of dissociation of HSP70 from PRKN-GPR37 complexes. Interacts with PSMD4 and PACRG. Interacts with LRRK2. Interacts with RANBP2. Interacts with SUMO1 but not SUMO2, which promotes nuclear localization and autoubiquitination. Interacts (via first RING-type domain) with AIMP2 (via N-terminus). Interacts with PSMA7 and RNF41. Interacts with PINK1. Forms a complex with PINK1 and PARK7. Interacts with CHPF, the interaction with isoform 2 may facilitate PRKN transport into the mitochondria. Interacts with MFN2 (phosphorylated), promotes PRKN localization in dysfunctional depolarized mitochondria. Interacts with FBXO7; this promotes translocation to dysfunctional depolarized mitochondria. Interacts with ZNF746. Interacts with heat shock protein 70 family members, including HSPA1L, HSPA1A and HSPA8; interaction HSPA1L promotes translocation to damaged mitochondria. Interacts with BAG4 and, to a lesser extent, BAG5; interaction with BAG4 inhibits translocation to damaged mitochondria. Forms a complex with PRKN and PARK7. Interacts with AMBRA1. Auto-ubiquitinates in an E2-dependent manner leading to its own degradation. Also polyubiquitinated by RNF41 for proteasomal degradation. Post-translationally, S-nitrosylated. In terms of processing, phosphorylated. Activation requires phosphorylation at Ser-65 by PINK1 and binding to PINK1 phosphorylated ubiquitin. Phosphorylation at Thr-174 by PINK1 and at Thr-216 is important for mitochondrial localization. Expressed in all subdivisions of the brain (at protein level). Highly expressed in brainstem, cranial nerve, pontine, cerebellar nuclei, indusium griseum, nuclei reticularis, strata oriens and laccunosum moleculare of the hippocampal CA2 region. Low levels were found in the telencephalon and diencephalon. Expressed in heart, liver, skeletal muscle, kidney and testis.

It localises to the cytoplasm. It is found in the cytosol. The protein localises to the nucleus. Its subcellular location is the endoplasmic reticulum. The protein resides in the mitochondrion. It localises to the mitochondrion outer membrane. It is found in the cell projection. The protein localises to the neuron projection. Its subcellular location is the postsynaptic density. The protein resides in the presynapse. It carries out the reaction [E2 ubiquitin-conjugating enzyme]-S-ubiquitinyl-L-cysteine + [acceptor protein]-L-lysine = [E2 ubiquitin-conjugating enzyme]-L-cysteine + [acceptor protein]-N(6)-ubiquitinyl-L-lysine.. It functions in the pathway protein modification; protein ubiquitination. With respect to regulation, in the autoinhibited state the side chain of Phe-462 inserts into a hydrophobic groove in RING-0, occluding the ubiquitin acceptor site Cys-430, whereas the REP repressor element binds RING-1 and blocks its E2-binding site. Activation of PRKN requires 2 steps: (1) phosphorylation at Ser-65 by PINK1 and (2) binding to phosphorylated ubiquitin, leading to unlock repression of the catalytic Cys-430 by the RING-0 region via an allosteric mechanism and converting PRKN to its fully-active form. According to another report, phosphorylation at Ser-65 by PINK1 is not essential for activation and only binding to phosphorylated ubiquitin is essential to unlock repression. In addition, ISG15 conjugation positively regulates its ubiquitin E3 ligase activity by suppressing the intramolecular interaction that maintains its autoinhibited conformation. Functions within a multiprotein E3 ubiquitin ligase complex, catalyzing the covalent attachment of ubiquitin moieties onto substrate proteins. Substrates include SYT11 and VDAC1. Other substrates are BCL2, CCNE1, GPR37, RHOT1/MIRO1, MFN1, MFN2, STUB1, SNCAIP, SEPTIN5, TOMM20, USP30, ZNF746, MIRO1 and AIMP2. Mediates monoubiquitination as well as 'Lys-6', 'Lys-11', 'Lys-48'-linked and 'Lys-63'-linked polyubiquitination of substrates depending on the context. Participates in the removal and/or detoxification of abnormally folded or damaged protein by mediating 'Lys-63'-linked polyubiquitination of misfolded proteins such as PARK7: 'Lys-63'-linked polyubiquitinated misfolded proteins are then recognized by HDAC6, leading to their recruitment to aggresomes, followed by degradation. Mediates 'Lys-63'-linked polyubiquitination of a 22 kDa O-linked glycosylated isoform of SNCAIP, possibly playing a role in Lewy-body formation. Mediates monoubiquitination of BCL2, thereby acting as a positive regulator of autophagy. Protects against mitochondrial dysfunction during cellular stress, by acting downstream of PINK1 to coordinate mitochondrial quality control mechanisms that remove and replace dysfunctional mitochondrial components. Depending on the severity of mitochondrial damage and/or dysfunction, activity ranges from preventing apoptosis and stimulating mitochondrial biogenesis to regulating mitochondrial dynamics and eliminating severely damaged mitochondria via mitophagy. Activation and recruitment onto the outer membrane of damaged/dysfunctional mitochondria (OMM) requires PINK1-mediated phosphorylation of both PRKN and ubiquitin. After mitochondrial damage, functions with PINK1 to mediate the decision between mitophagy or preventing apoptosis by inducing either the poly- or monoubiquitination of VDAC1, respectively; polyubiquitination of VDAC1 promotes mitophagy, while monoubiquitination of VDAC1 decreases mitochondrial calcium influx which ultimately inhibits apoptosis. When cellular stress results in irreversible mitochondrial damage, promotes the autophagic degradation of dysfunctional depolarized mitochondria (mitophagy) by promoting the ubiquitination of mitochondrial proteins such as TOMM20, RHOT1/MIRO1, MFN1 and USP30. Preferentially assembles 'Lys-6'-, 'Lys-11'- and 'Lys-63'-linked polyubiquitin chains, leading to mitophagy. The PINK1-PRKN pathway also promotes fission of damaged mitochondria by PINK1-mediated phosphorylation which promotes the PRKN-dependent degradation of mitochondrial proteins involved in fission such as MFN2. This prevents the refusion of unhealthy mitochondria with the mitochondrial network or initiates mitochondrial fragmentation facilitating their later engulfment by autophagosomes. Regulates motility of damaged mitochondria via the ubiquitination and subsequent degradation of MIRO1 and MIRO2; in motor neurons, this likely inhibits mitochondrial intracellular anterograde transport along the axons which probably increases the chance of the mitochondria undergoing mitophagy in the soma. Involved in mitochondrial biogenesis via the 'Lys-48'-linked polyubiquitination of transcriptional repressor ZNF746/PARIS which leads to its subsequent proteasomal degradation and allows activation of the transcription factor PPARGC1A. Limits the production of reactive oxygen species (ROS). Regulates cyclin-E during neuronal apoptosis. In collaboration with CHPF isoform 2, may enhance cell viability and protect cells from oxidative stress. Independently of its ubiquitin ligase activity, protects from apoptosis by the transcriptional repression of p53/TP53. May protect neurons against alpha synuclein toxicity, proteasomal dysfunction, GPR37 accumulation, and kainate-induced excitotoxicity. May play a role in controlling neurotransmitter trafficking at the presynaptic terminal and in calcium-dependent exocytosis. May represent a tumor suppressor gene. The chain is E3 ubiquitin-protein ligase parkin from Mus musculus (Mouse).